Consider the following 118-residue polypeptide: BolA-like protein 3 (118 aa).

It belongs to the BolA/IbaG family. Interacts with NFU1.

The protein localises to the mitochondrion matrix. Functionally, acts as a mitochondrial iron-sulfur (Fe-S) cluster assembly factor that facilitates [4Fe-4S] cluster insertion into a subset of mitochondrial proteins such as lipoyl synthase (LS) and succinate dehydrogenase (SDH). Required during the last step of iron-sulfur protein assembly when the iron-sulfur cluster is inserted into the target protein. Acts together with NFU1, later than BOL1 and GRX5 in the [4Fe-4S] cluster insertion process. Not required for [2Fe-2S] cluster insertion into mitochondrial proteins. This chain is BolA-like protein 3, found in Saccharomyces cerevisiae (strain ATCC 204508 / S288c) (Baker's yeast).